The following is a 326-amino-acid chain: MEMO1 family protein TTHA0924 (326 aa).

The protein belongs to the MEMO1 family.

This chain is MEMO1 family protein TTHA0924, found in Thermus thermophilus (strain ATCC 27634 / DSM 579 / HB8).